Consider the following 392-residue polypeptide: Na(+)/H(+) antiporter NhaA (392 aa).

11 helical membrane-spanning segments follow: residues 14-34 (AGGLILIFAAVVALFMANSPL), 59-79 (LLLWINDGLMAIFFLVVGLEV), 95-115 (IFPAIAALGGMLAPALIYLLF), 125-145 (GWAIPAATDIAFALGVMALLG), 154-174 (VFLLALAIIDDLGVIIIIALF), 179-199 (VSLQALGMAAAAIALLGYMNW), 213-233 (LVLWVCILKSGVHATLAGVIV), 254-274 (GLHPWVAYLILPLFAFANAGV), 287-307 (LLPLGIASGLFIGKPLGIFLF), 328-348 (IFAVSVLCGIGFTMSIFIASL), and 363-383 (LGILLGSTTAAVVGYSLLRLA).

The protein belongs to the NhaA Na(+)/H(+) (TC 2.A.33) antiporter family.

The protein resides in the cell inner membrane. The catalysed reaction is Na(+)(in) + 2 H(+)(out) = Na(+)(out) + 2 H(+)(in). In terms of biological role, na(+)/H(+) antiporter that extrudes sodium in exchange for external protons. The sequence is that of Na(+)/H(+) antiporter NhaA from Yersinia enterocolitica serotype O:8 / biotype 1B (strain NCTC 13174 / 8081).